A 390-amino-acid polypeptide reads, in one-letter code: Lipid-A-disaccharide synthase (390 aa).

The protein belongs to the LpxB family.

It carries out the reaction a lipid X + a UDP-2-N,3-O-bis[(3R)-3-hydroxyacyl]-alpha-D-glucosamine = a lipid A disaccharide + UDP + H(+). It participates in bacterial outer membrane biogenesis; LPS lipid A biosynthesis. Condensation of UDP-2,3-diacylglucosamine and 2,3-diacylglucosamine-1-phosphate to form lipid A disaccharide, a precursor of lipid A, a phosphorylated glycolipid that anchors the lipopolysaccharide to the outer membrane of the cell. The polypeptide is Lipid-A-disaccharide synthase (Rickettsia felis (strain ATCC VR-1525 / URRWXCal2) (Rickettsia azadi)).